A 565-amino-acid chain; its full sequence is Glycine/sarcosine/dimethylglycine N-methyltransferase (565 aa).

A compositionally biased stretch (basic and acidic residues) spans 1–10 (MTKSVDDLAR). The interval 1 to 34 (MTKSVDDLARGDQAGDEQDPVHREQQTFGDNPLE) is disordered. Residues Y45, W53, R62, A86, D107, 134–135 (DW), and L152 contribute to the S-adenosyl-L-methionine site. 3 residues coordinate substrate: N154, R187, and Y226.

This sequence belongs to the class I-like SAM-binding methyltransferase superfamily. Glycine N-methyltransferase family. Monomer.

It carries out the reaction glycine + 2 S-adenosyl-L-methionine = N,N-dimethylglycine + 2 S-adenosyl-L-homocysteine + 2 H(+). The catalysed reaction is sarcosine + 2 S-adenosyl-L-methionine = glycine betaine + 2 S-adenosyl-L-homocysteine + 2 H(+). The enzyme catalyses glycine + S-adenosyl-L-methionine = sarcosine + S-adenosyl-L-homocysteine + H(+). It catalyses the reaction sarcosine + S-adenosyl-L-methionine = N,N-dimethylglycine + S-adenosyl-L-homocysteine + H(+). It carries out the reaction N,N-dimethylglycine + S-adenosyl-L-methionine = glycine betaine + S-adenosyl-L-homocysteine + H(+). It functions in the pathway amine and polyamine biosynthesis; betaine biosynthesis via glycine pathway; betaine from glycine: step 1/3. The protein operates within amine and polyamine biosynthesis; betaine biosynthesis via glycine pathway; betaine from glycine: step 2/3. Its pathway is amine and polyamine biosynthesis; betaine biosynthesis via glycine pathway; betaine from glycine: step 3/3. In terms of biological role, catalyzes the methylation of glycine, sarcosine and dimethylglycine to sarcosine, dimethylglycine and betaine, respectively, with S-adenosylmethionine (AdoMet) acting as the methyl donor. Shows low level of activity on glycine when expressed in E.coli. This Actinopolyspora halophila protein is Glycine/sarcosine/dimethylglycine N-methyltransferase.